The chain runs to 944 residues: Valine--tRNA ligase (944 aa).

The 'HIGH' region motif lies at proline 43 to histidine 53. Residues lysine 550–serine 554 carry the 'KMSKS' region motif. Lysine 553 is an ATP binding site. Positions leucine 878–leucine 944 form a coiled coil.

It belongs to the class-I aminoacyl-tRNA synthetase family. ValS type 1 subfamily. As to quaternary structure, monomer.

It localises to the cytoplasm. The enzyme catalyses tRNA(Val) + L-valine + ATP = L-valyl-tRNA(Val) + AMP + diphosphate. Its function is as follows. Catalyzes the attachment of valine to tRNA(Val). As ValRS can inadvertently accommodate and process structurally similar amino acids such as threonine, to avoid such errors, it has a 'posttransfer' editing activity that hydrolyzes mischarged Thr-tRNA(Val) in a tRNA-dependent manner. In Xanthomonas campestris pv. campestris (strain B100), this protein is Valine--tRNA ligase.